Consider the following 83-residue polypeptide: Small ribosomal subunit protein bS20 (83 aa).

The protein belongs to the bacterial ribosomal protein bS20 family.

Its function is as follows. Binds directly to 16S ribosomal RNA. In Staphylococcus aureus (strain JH1), this protein is Small ribosomal subunit protein bS20.